The primary structure comprises 539 residues: GMP synthase [glutamine-hydrolyzing] (539 aa).

One can recognise a Glutamine amidotransferase type-1 domain in the interval 4 to 202 (KILILDFGSQ…VLQIAGAKPD (199 aa)). Residue Cys81 is the Nucleophile of the active site. Active-site residues include His176 and Glu178. The GMPS ATP-PPase domain occupies 203–395 (WIMSNHIEEA…LGLPPEMVYR (193 aa)). An ATP-binding site is contributed by 230 to 236 (SGGVDSS).

As to quaternary structure, homodimer.

It catalyses the reaction XMP + L-glutamine + ATP + H2O = GMP + L-glutamate + AMP + diphosphate + 2 H(+). The protein operates within purine metabolism; GMP biosynthesis; GMP from XMP (L-Gln route): step 1/1. Its function is as follows. Catalyzes the synthesis of GMP from XMP. This chain is GMP synthase [glutamine-hydrolyzing], found in Burkholderia ambifaria (strain MC40-6).